A 109-amino-acid polypeptide reads, in one-letter code: Nucleoid-associated protein LGAS_0369 (109 aa).

The protein belongs to the YbaB/EbfC family. Homodimer.

The protein localises to the cytoplasm. The protein resides in the nucleoid. Its function is as follows. Binds to DNA and alters its conformation. May be involved in regulation of gene expression, nucleoid organization and DNA protection. The sequence is that of Nucleoid-associated protein LGAS_0369 from Lactobacillus gasseri (strain ATCC 33323 / DSM 20243 / BCRC 14619 / CIP 102991 / JCM 1131 / KCTC 3163 / NCIMB 11718 / NCTC 13722 / AM63).